A 668-amino-acid chain; its full sequence is Potassium-transporting ATPase ATP-binding subunit (668 aa).

4 consecutive transmembrane segments (helical) span residues 31 to 51 (MFLT…PSFF), 62 to 82 (FYVA…ISTA), 213 to 233 (TVFL…IFAI), and 243 to 263 (IVML…ALLP). Catalysis depends on Asp298, which acts as the 4-aspartylphosphate intermediate. ATP is bound by residues Asp335, Glu339, 367 to 374 (FSSETKFS), and Lys385. The Mg(2+) site is built by Asp504 and Asp508. 3 helical membrane passes run 573-593 (YFVI…VNIL), 599-619 (IVAV…LIPL), and 644-664 (IGGV…LIAW).

Belongs to the cation transport ATPase (P-type) (TC 3.A.3) family. Type IA subfamily. As to quaternary structure, the system is composed of three essential subunits: KdpA, KdpB and KdpC.

It localises to the cell membrane. The catalysed reaction is K(+)(out) + ATP + H2O = K(+)(in) + ADP + phosphate + H(+). Its function is as follows. Part of the high-affinity ATP-driven potassium transport (or Kdp) system, which catalyzes the hydrolysis of ATP coupled with the electrogenic transport of potassium into the cytoplasm. This subunit is responsible for energy coupling to the transport system and for the release of the potassium ions to the cytoplasm. This chain is Potassium-transporting ATPase ATP-binding subunit, found in Thermoplasma volcanium (strain ATCC 51530 / DSM 4299 / JCM 9571 / NBRC 15438 / GSS1).